We begin with the raw amino-acid sequence, 496 residues long: Aspartic proteinase (496 aa).

The first 24 residues, 1-24 (MAKRHLLLVTTCLWALSCALLLHA), serve as a signal peptide directing secretion. Positions 25–59 (SSDGFLRVNLNKKRLDKEDLTAAKLAQQGNRLLKT) are cleaved as a propeptide — activation peptide. Residues 77–493 (YYGVIGLGSP…DFGKDRIGFA (417 aa)) enclose the Peptidase A1 domain. D95 is an active-site residue. 2 disulfide bridges follow: C108–C114 and C273–C277. D282 is an active-site residue. In terms of domain architecture, Saposin B-type spans 307–407 (IISTECKEVV…NQLCERLPSP (101 aa)). 4 disulfide bridges follow: C312–C401, C337–C373, C343–C370, and C415–C452. N-linked (GlcNAc...) asparagine glycosylation is present at N387.

Belongs to the peptidase A1 family.

The protein resides in the vacuole. Its function is as follows. Involved in the breakdown of propeptides of storage proteins in protein-storage vacuoles. The sequence is that of Aspartic proteinase (RAP) from Oryza sativa subsp. japonica (Rice).